A 427-amino-acid polypeptide reads, in one-letter code: UPF0229 protein YeaH (427 aa).

Over residues 79 to 90 (NDHFVQNDRIER) the composition is skewed to basic and acidic residues. The interval 79–110 (NDHFVQNDRIERPQGGGGGSGSGQGQASQDGE) is disordered. Over residues 92–102 (QGGGGGSGSGQ) the composition is skewed to gly residues.

It belongs to the UPF0229 family.

This is UPF0229 protein YeaH from Escherichia coli (strain K12 / MC4100 / BW2952).